Consider the following 25-residue polypeptide: Dermaseptin-DI5 (25 aa).

The protein belongs to the frog skin active peptide (FSAP) family. Dermaseptin subfamily. In terms of tissue distribution, expressed by the skin glands.

It is found in the secreted. In terms of biological role, antibacterial peptide with activity against Gram-positive bacteria S.aureus and E.faecalis, and Gram-negative bacteria P.aeruginosa and E.coli. The chain is Dermaseptin-DI5 from Phyllomedusa distincta (Monkey frog).